Reading from the N-terminus, the 853-residue chain is MAEGNNKEEVIHLNNFPCHRGKEWMAVREGPITISDSSDEEGIPMLVTPATEQQEDDLDDDVILTEDDSEDEYGGFLDLESGKKEGEAKPGPSSKQTADDIVNPRLEQKVIILGENGLLFPESEPLEVQNQSSEDSETELLSNPGEPAASVDDQLIGEEYWLDHPYFQAPNPQPQERTNQVVPQERHSESEMGPMFFRHDFPEPAFPRPEPQQEGIPGPASPQPAHPLGELEDQQLAIDEDPGPAFPLSGPQEANLANMWEQEAAEVDQDLIPLLVKETEARFPDVASGYVEEIIHLKNYYDLNVLCNFLLENPDYPKREDRLIIHPSSSLLASQDDAKLPKIDFFDYSKLTPLDQRCFIQAADLLMADFKMLSSQDIKWALHELKGHYAITRKAFSDAIKKWQELSPETSGKRKKRKEMNQYSFIDFKFEQGNIKIEKRMFFLENKRRHCRYYDHQALLPAVKQEQEFYEQKIKEMAEHEDFLLALQMNEEQYQKDGQLIECRCCYGEFPFEELTQCADAHLFCKECLIRYAQEAVFGSGKSELSCMEGSCTCSFPTSELEKVLPQTILYKYYERKAEEEVAAAYADELVRCPSCSFPALLDSDVKRFSCPNPRCRKETCRKCQGLWKEHNGLTCEELAEKDDIKYRTSIEEKMTAARIRKCHKCGTGLIKSEGCNRMSCRCGAQMCYLCRVSINGYDHFCQHPRSPGAPCQECSRCSLWTDPTEDDEKLIEEIQKEAEEEQKRKNGENTFKRIGPPLEKPAEKVQRVEALPRPVPQNLHPQMPPYAFVHPPFPLPPVRPVFNNFPINMGPVPAPYVPPLPNVRVNYDFGHMHVPLEHNLPMHFGPQPRHRF.

Disordered stretches follow at residues 33 to 102 (TISD…DDIV), 125 to 152 (PLEV…ASVD), and 165 to 228 (PYFQ…AHPL). Acidic residues predominate over residues 53–73 (QQEDDLDDDVILTEDDSEDEY). Residue lysine 89 forms a Glycyl lysine isopeptide (Lys-Gly) (interchain with G-Cter in SUMO2) linkage. Glycyl lysine isopeptide (Lys-Gly) (interchain with G-Cter in SUMO2) cross-links involve residues lysine 339 and lysine 342. A Phosphoserine modification is found at serine 407. Glycyl lysine isopeptide (Lys-Gly) (interchain with G-Cter in SUMO2) cross-links involve residues lysine 413, lysine 418, lysine 436, lysine 447, and lysine 473. Positions 463 to 479 (VKQEQEFYEQKIKEMAE) form a coiled coil. The TRIAD supradomain stretch occupies residues 499–716 (QLIECRCCYG…SPGAPCQECS (218 aa)). 6 residues coordinate Zn(2+): cysteine 503, cysteine 506, cysteine 525, cysteine 528, cysteine 593, and cysteine 596. Residues 503 to 552 (CRCCYGEFPFEELTQCADAHLFCKECLIRYAQEAVFGSGKSELSCMEGSC) form an RING-type 1 zinc finger. An IBR-type zinc finger spans residues 571–636 (YKYYERKAEE…LWKEHNGLTC (66 aa)). Lysine 607 participates in a covalent cross-link: Glycyl lysine isopeptide (Lys-Gly) (interchain with G-Cter in SUMO2). Residues cysteine 611, cysteine 616, cysteine 621, cysteine 624, histidine 631, and cysteine 636 each coordinate Zn(2+). Residues lysine 646 and lysine 654 each participate in a glycyl lysine isopeptide (Lys-Gly) (interchain with G-Cter in SUMO2) cross-link. Residues cysteine 663 and cysteine 666 each contribute to the Zn(2+) site. The segment at 663–691 (CHKCGTGLIKSEGCNRMSCRCGAQMCYLC) adopts an RING-type 2; atypical zinc-finger fold. Cysteine 676 is an active-site residue. Residues cysteine 681, cysteine 683, cysteine 688, cysteine 691, histidine 704, and cysteine 712 each contribute to the Zn(2+) site. Residues 725–751 (TEDDEKLIEEIQKEAEEEQKRKNGENT) adopt a coiled-coil conformation. Residues lysine 753 and lysine 761 each participate in a glycyl lysine isopeptide (Lys-Gly) (interchain with G-Cter in SUMO2) cross-link.

As to quaternary structure, interacts with UBE2L3 and to some extent with UBE2L6. Interacts with TRAF3, TLR3, TLR4, TLR5 and TLR9. Isoform 3/ZIN binds RIPK1. Auto-ubiquitinated. In terms of processing, phosphorylation at Ser-719 enhances acceptor ubiquitin binding and chain-type specificity towards 'Lys-63' di-ubiquitin but not di-ubiquitin with other linkage types.

It is found in the cytoplasm. Its subcellular location is the cytoplasmic vesicle. It localises to the clathrin-coated vesicle. It catalyses the reaction S-ubiquitinyl-[E2 ubiquitin-conjugating enzyme]-L-cysteine + [acceptor protein]-L-lysine = [E2 ubiquitin-conjugating enzyme]-L-cysteine + N(6)-ubiquitinyl-[acceptor protein]-L-lysine.. The protein operates within protein modification; protein ubiquitination. Allosterically activated by 'Lys-63'-linked di-ubiquitin. Its function is as follows. E3 ubiquitin ligase which accepts ubiquitin from specific E2 ubiquitin-conjugating enzymes, and then transfers it to substrates promoting their ubiquitination. Plays a role in the regulation of antiviral responses by promoting the degradation of TRAF3, TLR4 and TLR9. In turn, down-regulates NF-kappa-B and IRF3 activation as well as beta interferon production. Also participates in the regulation of autophagy by ubiquitinating BECN1 leading to its degradation and autophagy inhibition. Plays a role in ARC-dependent synaptic plasticity by mediating ARC ubiquitination resulting in its rapid proteasomal degradation. Plays aso an essential role in spermatogenesis and male fertility. Mechanistically, regulates meiosis by promoting the degradation of PRKACB through the ubiquitin-mediated lysosome pathway. Modulates the gonadotropin-releasing hormone signal pathway by affecting the stability of STAU2 that is required for the microtubule-dependent transport of neuronal RNA from the cell body to the dendrite. In Mus musculus (Mouse), this protein is E3 ubiquitin-protein ligase RNF216 (Rnf216).